The chain runs to 213 residues: Peroxisomal protein 2 (213 aa).

The Peroxisomal target signal 1 (PTS1) motif lies at 211-213; it reads ETL.

This sequence belongs to the PXP2 family.

The protein resides in the peroxisome matrix. The protein localises to the cytoplasm. It localises to the cytosol. It is found in the nucleus. Functionally, probably involved in peroxisome formation or maintenance as well as in amino acid metabolism. The protein is Peroxisomal protein 2 of Schizosaccharomyces pombe (strain 972 / ATCC 24843) (Fission yeast).